Consider the following 486-residue polypeptide: Retrograde regulation protein 3 (486 aa).

The 9aaTAD 1 motif lies at Glu-27–Thr-35. Composition is skewed to polar residues over residues Asn-75–Thr-94 and Ser-101–Gly-130. The interval Asn-75–Gly-130 is disordered. 3 positions are modified to phosphoserine: Ser-81, Ser-123, and Ser-142. Thr-150 is subject to Phosphothreonine. A 9aaTAD 2 motif is present at residues Ser-189–Thr-197. Phosphoserine occurs at positions 227, 236, and 241. Residues Arg-243–Leu-274 are disordered. Polar residues predominate over residues Ser-246–Glu-263. Ser-269 is modified (phosphoserine). The 60-residue stretch at Arg-285 to Leu-344 folds into the bHLH domain. The interval Ala-374–Glu-395 is disordered.

As to quaternary structure, binds DNA as a heterodimer with RTG1.

The protein resides in the nucleus. Transcription factor that regulates CIT2 gene expression. Binds to two identical sites oriented as inverted repeats 28 bp apart in a regulatory upstream activation sequence element (UASR) in the CIT2 promoter. The core binding site is 5'-GGTCAC-3'. The sequence is that of Retrograde regulation protein 3 (RTG3) from Saccharomyces cerevisiae (strain ATCC 204508 / S288c) (Baker's yeast).